The chain runs to 406 residues: Arginine biosynthesis bifunctional protein ArgJ (406 aa).

Thr-156, Lys-182, Thr-193, Glu-279, Asn-401, and Thr-406 together coordinate substrate. Thr-193 functions as the Nucleophile in the catalytic mechanism.

Belongs to the ArgJ family. Heterotetramer of two alpha and two beta chains.

The protein localises to the cytoplasm. It carries out the reaction N(2)-acetyl-L-ornithine + L-glutamate = N-acetyl-L-glutamate + L-ornithine. It catalyses the reaction L-glutamate + acetyl-CoA = N-acetyl-L-glutamate + CoA + H(+). It participates in amino-acid biosynthesis; L-arginine biosynthesis; L-ornithine and N-acetyl-L-glutamate from L-glutamate and N(2)-acetyl-L-ornithine (cyclic): step 1/1. It functions in the pathway amino-acid biosynthesis; L-arginine biosynthesis; N(2)-acetyl-L-ornithine from L-glutamate: step 1/4. Feedback inhibition by L-arginine. Its function is as follows. Catalyzes two activities which are involved in the cyclic version of arginine biosynthesis: the synthesis of N-acetylglutamate from glutamate and acetyl-CoA as the acetyl donor, and of ornithine by transacetylation between N(2)-acetylornithine and glutamate. In Bacillus amyloliquefaciens (Bacillus velezensis), this protein is Arginine biosynthesis bifunctional protein ArgJ.